Consider the following 392-residue polypeptide: S-adenosylmethionine decarboxylase proenzyme (392 aa).

Residues Glu-43 and Glu-46 contribute to the active site. Ser-100 serves as the catalytic Schiff-base intermediate with substrate; via pyruvic acid. Residue Ser-100 is modified to Pyruvic acid (Ser); by autocatalysis. Cys-114 (proton donor; for catalytic activity) is an active-site residue. Residues Ser-264 and His-277 each act as proton acceptor; for processing activity in the active site.

It belongs to the eukaryotic AdoMetDC family. Pyruvate serves as cofactor. Is synthesized initially as an inactive proenzyme. Formation of the active enzyme involves a self-maturation process in which the active site pyruvoyl group is generated from an internal serine residue via an autocatalytic post-translational modification. Two non-identical subunits are generated from the proenzyme in this reaction, and the pyruvate is formed at the N-terminus of the alpha chain, which is derived from the carboxyl end of the proenzyme. The post-translation cleavage follows an unusual pathway, termed non-hydrolytic serinolysis, in which the side chain hydroxyl group of the serine supplies its oxygen atom to form the C-terminus of the beta chain, while the remainder of the serine residue undergoes an oxidative deamination to produce ammonia and the pyruvoyl group blocking the N-terminus of the alpha chain.

It catalyses the reaction S-adenosyl-L-methionine + H(+) = S-adenosyl 3-(methylsulfanyl)propylamine + CO2. It functions in the pathway amine and polyamine biosynthesis; S-adenosylmethioninamine biosynthesis; S-adenosylmethioninamine from S-adenosyl-L-methionine: step 1/1. This is S-adenosylmethionine decarboxylase proenzyme from Leishmania infantum.